A 539-amino-acid chain; its full sequence is MAKTLLFGEEARRSMQAGVDKLANTVKVTLGPKGRNVILDKKFGSPLITNDGVTIAREIELEDAYENMGAQLVKEVATKTNDVAGDGTTTATLLAQAIIREGLKNVTAGANPILIRNGIKTAVEKAVEEIQKISKPVNGKEDIARVAAISAADEKIGKLIADAMEKVGNEGVITVEESKSMGTELDVVEGMQFDRGYVSAYMVTDTEKMEAVLDNPLVLITDKKISNIQDLLPLLEQIVQAGKKLLIIADDIEGEAMTTLVVNKLRGTFTCVGVKAPGFGDRRKEMLQDIATLTGGVVISDEVGGDLKEATLDMLGEAESVKVTKESTTIVNGRGNSEEIKNRINQIKLQLEATTSEFDKEKLQERLAKLAGGVAVVKVGAATETELKESKLRIEDALAATKAAVEEGIVPGGGTAYVNVINEVAKLTSDIQDEQVGINIIVRSLEEPMRQIAHNAGLEGSVIIEKVKNSDAGVGFDALRGEYKDMIKAGIVDPTKVTRSALQNAASVASTFLTTEAAVADIPEKEMPQGAGMGMDGMY.

ATP contacts are provided by residues 29 to 32 (TLGP), 86 to 90 (DGTTT), Gly-413, 477 to 479 (DAL), and Asp-493.

This sequence belongs to the chaperonin (HSP60) family. In terms of assembly, forms a cylinder of 14 subunits composed of two heptameric rings stacked back-to-back. Interacts with the co-chaperonin GroES.

It localises to the cytoplasm. The enzyme catalyses ATP + H2O + a folded polypeptide = ADP + phosphate + an unfolded polypeptide.. Functionally, together with its co-chaperonin GroES, plays an essential role in assisting protein folding. The GroEL-GroES system forms a nano-cage that allows encapsulation of the non-native substrate proteins and provides a physical environment optimized to promote and accelerate protein folding. This is Chaperonin GroEL from Clostridium perfringens (strain ATCC 13124 / DSM 756 / JCM 1290 / NCIMB 6125 / NCTC 8237 / Type A).